Consider the following 2070-residue polypeptide: HEAT repeat-containing protein 5B (2070 aa).

3 HEAT repeats span residues 848–885 (EVRK…VVGE), 1062–1099 (VNLS…REAA), and 1290–1327 (LHLS…KFAS). Serine 1737 is modified (phosphoserine).

It belongs to the HEATR5 family. As to quaternary structure, self-associates. Component of the aftiphilin/p200/gamma-synergin complex, at least composed of AFTPH/aftiphilin, HEATR5B/p200a and SYNRG/gamma-synergin, which plays a role in the AP1G1/AP-1-mediated protein trafficking from early to recycling endosomes and between the trans-Golgi network (TGN) and endosomes. Within the complex interacts with AFTPH/aftiphilin and SYNRG/gamma-synergin; the interactions are direct. Interacts with GGA1.

It is found in the cytoplasm. The protein localises to the perinuclear region. Its subcellular location is the cytoplasmic vesicle. The protein resides in the clathrin-coated vesicle. Component of clathrin-coated vesicles. Component of the aftiphilin/p200/gamma-synergin complex, which plays roles in AP1G1/AP-1-mediated protein trafficking including the trafficking of transferrin from early to recycling endosomes, and the membrane trafficking of furin and the lysosomal enzyme cathepsin D between the trans-Golgi network (TGN) and endosomes. The protein is HEAT repeat-containing protein 5B (Heatr5b) of Mus musculus (Mouse).